A 603-amino-acid chain; its full sequence is Sulfite reductase [NADPH] flavoprotein alpha-component (603 aa).

A Flavodoxin-like domain is found at Ile64–Val202. FMN-binding positions include Ser70–Ala75, Ser117–Gly120, and Leu153–Ala162. The FAD-binding FR-type domain maps to Glu236–Pro452. FAD-binding positions include Thr326, Leu360, Arg390–Ser393, Thr408–Gly410, Tyr414, and Gly423–Ser426. Residues Ser523–Arg524, Lys529–Gln533, and Asp565 contribute to the NADP(+) site. Tyr603 is an FAD binding site.

This sequence belongs to the NADPH-dependent sulphite reductase flavoprotein subunit CysJ family. It in the N-terminal section; belongs to the flavodoxin family. The protein in the C-terminal section; belongs to the flavoprotein pyridine nucleotide cytochrome reductase family. Alpha(8)-beta(8). The alpha component is a flavoprotein, the beta component is a hemoprotein. Requires FAD as cofactor. The cofactor is FMN.

The catalysed reaction is hydrogen sulfide + 3 NADP(+) + 3 H2O = sulfite + 3 NADPH + 4 H(+). Its pathway is sulfur metabolism; hydrogen sulfide biosynthesis; hydrogen sulfide from sulfite (NADPH route): step 1/1. Component of the sulfite reductase complex that catalyzes the 6-electron reduction of sulfite to sulfide. This is one of several activities required for the biosynthesis of L-cysteine from sulfate. The flavoprotein component catalyzes the electron flow from NADPH -&gt; FAD -&gt; FMN to the hemoprotein component. This chain is Sulfite reductase [NADPH] flavoprotein alpha-component, found in Sodalis glossinidius (strain morsitans).